The chain runs to 163 residues: Superoxide dismutase [Mn] (163 aa).

Mn(2+) contacts are provided by histidine 2, histidine 50, aspartate 134, and histidine 138.

It belongs to the iron/manganese superoxide dismutase family. It depends on Mn(2+) as a cofactor.

It carries out the reaction 2 superoxide + 2 H(+) = H2O2 + O2. Its function is as follows. Destroys superoxide anion radicals which are normally produced within the cells and which are toxic to biological systems. This is Superoxide dismutase [Mn] (sodA) from Mycobacterium kansasii.